Consider the following 79-residue polypeptide: Probable Fe(2+)-trafficking protein (79 aa).

Belongs to the Fe(2+)-trafficking protein family. As to quaternary structure, monomer.

Could be a mediator in iron transactions between iron acquisition and iron-requiring processes, such as synthesis and/or repair of Fe-S clusters in biosynthetic enzymes. The chain is Probable Fe(2+)-trafficking protein from Blochmanniella floridana.